Reading from the N-terminus, the 84-residue chain is METVISFTAIAVAIMIGLAALGTAIGFAILGGKFLEASARQPELAPALQIKMFIVAGLLDAISMIAVGVALFFVFANPFLAQLG.

2 helical membrane passes run 10-30 and 53-73; these read IAVA…FAIL and FIVA…ALFF.

It belongs to the ATPase C chain family. As to quaternary structure, F-type ATPases have 2 components, F(1) - the catalytic core - and F(0) - the membrane proton channel. F(1) has five subunits: alpha(3), beta(3), gamma(1), delta(1), epsilon(1). F(0) has three main subunits: a(1), b(2) and c(10-14). The alpha and beta chains form an alternating ring which encloses part of the gamma chain. F(1) is attached to F(0) by a central stalk formed by the gamma and epsilon chains, while a peripheral stalk is formed by the delta and b chains.

It is found in the cell inner membrane. Its function is as follows. F(1)F(0) ATP synthase produces ATP from ADP in the presence of a proton or sodium gradient. F-type ATPases consist of two structural domains, F(1) containing the extramembraneous catalytic core and F(0) containing the membrane proton channel, linked together by a central stalk and a peripheral stalk. During catalysis, ATP synthesis in the catalytic domain of F(1) is coupled via a rotary mechanism of the central stalk subunits to proton translocation. Functionally, key component of the F(0) channel; it plays a direct role in translocation across the membrane. A homomeric c-ring of between 10-14 subunits forms the central stalk rotor element with the F(1) delta and epsilon subunits. This is ATP synthase subunit c from Shewanella putrefaciens (strain CN-32 / ATCC BAA-453).